Reading from the N-terminus, the 272-residue chain is Phosphatidylglycerol--prolipoprotein diacylglyceryl transferase (272 aa).

7 helical membrane passes run 17 to 37 (LQVH…WGLA), 55 to 75 (LVFY…VLFY), 90 to 110 (VWTG…AMLF), 125 to 145 (FIAP…FIGG), 174 to 194 (PSQI…LWWF), 202 to 222 (MAVS…MEFF), and 230 to 250 (GFIL…MLLI). Position 138 (R138) interacts with a 1,2-diacyl-sn-glycero-3-phospho-(1'-sn-glycerol).

The protein belongs to the Lgt family.

Its subcellular location is the cell inner membrane. The catalysed reaction is L-cysteinyl-[prolipoprotein] + a 1,2-diacyl-sn-glycero-3-phospho-(1'-sn-glycerol) = an S-1,2-diacyl-sn-glyceryl-L-cysteinyl-[prolipoprotein] + sn-glycerol 1-phosphate + H(+). The protein operates within protein modification; lipoprotein biosynthesis (diacylglyceryl transfer). In terms of biological role, catalyzes the transfer of the diacylglyceryl group from phosphatidylglycerol to the sulfhydryl group of the N-terminal cysteine of a prolipoprotein, the first step in the formation of mature lipoproteins. This Acinetobacter baumannii (strain ACICU) protein is Phosphatidylglycerol--prolipoprotein diacylglyceryl transferase.